A 599-amino-acid chain; its full sequence is uncharacterized protein (599 aa).

49–56 contributes to the ATP binding site; the sequence is GPPGSGKT. Residues 416–599 form the Macro domain; sequence AEVRKELEYK…TKIFEEKFSV (184 aa).

This sequence in the N-terminal section; belongs to the AAA ATPase family. RarA/MGS1/WRNIP1 subfamily.

This is an uncharacterized protein from Thermotoga maritima (strain ATCC 43589 / DSM 3109 / JCM 10099 / NBRC 100826 / MSB8).